Consider the following 295-residue polypeptide: Glutamyl-Q tRNA(Asp) synthetase (295 aa).

Residues 5–9 (RFAPS) and Glu41 contribute to the L-glutamate site. The 'HIGH' region signature appears at 8–18 (PSPTGLLHIGS). Zn(2+)-binding residues include Cys97, Cys99, Tyr117, and Cys121. L-glutamate-binding residues include Tyr178 and Arg196. The short motif at 234 to 238 (KWSKQ) is the 'KMSKS' region element. Residue Lys237 coordinates ATP.

The protein belongs to the class-I aminoacyl-tRNA synthetase family. GluQ subfamily. The cofactor is Zn(2+).

In terms of biological role, catalyzes the tRNA-independent activation of glutamate in presence of ATP and the subsequent transfer of glutamate onto a tRNA(Asp). Glutamate is transferred on the 2-amino-5-(4,5-dihydroxy-2-cyclopenten-1-yl) moiety of the queuosine in the wobble position of the QUC anticodon. The chain is Glutamyl-Q tRNA(Asp) synthetase from Neisseria meningitidis serogroup C (strain 053442).